Reading from the N-terminus, the 320-residue chain is MAFPKKKLRGLVAATITPMTENGEINFPVIGQYVDYLVKEQGVKNIFVNGTTGEGLSLSVSERRQVAEEWVNQGRNKLDQVVIHVGALNVKESQELAQHAAEIGADGIAVIAPFFFKSQNKDALISFLREVAAAAPTLPFYYYHMPSMTGVKIRAEELLDGIQDKIPTFQGLKFTDTDLLDFGQCVDQNHQRQFALLFGVDEQLLSALVMGATGAVGSTYNYLGKKTNQMLEAFEQKDLASALSYQFRIQRFINYVIKLGFGVSQTKAIMTLVSGIPMGPPRLPLQKATQEFTAKAEAKLKSLDFLSSPSVKEGKPLASA.

Aceneuramate is bound by residues threonine 51 and threonine 52. Tyrosine 143 serves as the catalytic Proton donor. Lysine 173 functions as the Schiff-base intermediate with substrate in the catalytic mechanism. 5 residues coordinate aceneuramate: threonine 175, glycine 199, aspartate 201, glutamate 202, and serine 218. Phosphoserine is present on serine 308.

This sequence belongs to the DapA family. NanA subfamily. Homotetramer.

It localises to the cytoplasm. The catalysed reaction is aceneuramate = aldehydo-N-acetyl-D-mannosamine + pyruvate. It functions in the pathway amino-sugar metabolism; N-acetylneuraminate degradation. In terms of biological role, catalyzes the cleavage of N-acetylneuraminic acid (sialic acid) to form pyruvate and N-acetylmannosamine via a Schiff base intermediate. It prevents sialic acids from being recycled and returning to the cell surface. Involved in the N-glycolylneuraminic acid (Neu5Gc) degradation pathway. This is N-acetylneuraminate lyase from Mus musculus (Mouse).